A 129-amino-acid chain; its full sequence is UPF0102 protein CPS_4433 (129 aa).

The protein belongs to the UPF0102 family.

The chain is UPF0102 protein CPS_4433 from Colwellia psychrerythraea (strain 34H / ATCC BAA-681) (Vibrio psychroerythus).